A 251-amino-acid polypeptide reads, in one-letter code: Large ribosomal subunit protein uL16m (251 aa).

The transit peptide at 1 to 29 (MWRLLSGARAPVLRATLSDSWAAPPARAG) directs the protein to the mitochondrion.

This sequence belongs to the universal ribosomal protein uL16 family. In terms of assembly, component of the mitochondrial ribosome large subunit (39S) which comprises a 16S rRNA and about 50 distinct proteins.

It is found in the mitochondrion. In Bos taurus (Bovine), this protein is Large ribosomal subunit protein uL16m (MRPL16).